Reading from the N-terminus, the 1180-residue chain is DNA-directed RNA polymerase subunit beta (1180 aa).

Belongs to the RNA polymerase beta chain family. The RNAP catalytic core consists of 2 alpha, 1 beta, 1 beta' and 1 omega subunit. When a sigma factor is associated with the core the holoenzyme is formed, which can initiate transcription.

It carries out the reaction RNA(n) + a ribonucleoside 5'-triphosphate = RNA(n+1) + diphosphate. Functionally, DNA-dependent RNA polymerase catalyzes the transcription of DNA into RNA using the four ribonucleoside triphosphates as substrates. The polypeptide is DNA-directed RNA polymerase subunit beta (Macrococcus caseolyticus (strain JCSC5402) (Macrococcoides caseolyticum)).